A 247-amino-acid chain; its full sequence is tRNA pseudouridine synthase A (247 aa).

Residue aspartate 52 is the Nucleophile of the active site. Position 113 (tyrosine 113) interacts with substrate.

It belongs to the tRNA pseudouridine synthase TruA family. As to quaternary structure, homodimer.

The catalysed reaction is uridine(38/39/40) in tRNA = pseudouridine(38/39/40) in tRNA. Its function is as follows. Formation of pseudouridine at positions 38, 39 and 40 in the anticodon stem and loop of transfer RNAs. The polypeptide is tRNA pseudouridine synthase A (Sinorhizobium medicae (strain WSM419) (Ensifer medicae)).